A 423-amino-acid polypeptide reads, in one-letter code: Kynurenine--oxoglutarate transaminase 1 (423 aa).

Gly-36 lines the substrate pocket. At Lys-82 the chain carries N6-succinyllysine. Asn-185 is a substrate binding site. Residue Lys-247 is modified to N6-(pyridoxal phosphate)lysine. Arg-398 lines the substrate pocket.

The protein belongs to the class-I pyridoxal-phosphate-dependent aminotransferase family. In terms of assembly, homodimer. The cofactor is pyridoxal 5'-phosphate. Detected in kidney.

The protein resides in the cytoplasm. It localises to the cytosol. It is found in the mitochondrion matrix. The catalysed reaction is L-kynurenine + 2-oxoglutarate = kynurenate + L-glutamate + H2O. It catalyses the reaction 3-phenylpyruvate + L-glutamine = 2-oxoglutaramate + L-phenylalanine. The enzyme catalyses an S-substituted L-cysteine + H2O = a thiol + pyruvate + NH4(+). It participates in amino-acid degradation; L-kynurenine degradation; kynurenate from L-kynurenine: step 1/2. Its activity is regulated as follows. Inhibited by aminooxyacetate (in vitro). Functionally, catalyzes the irreversible transamination of the L-tryptophan metabolite L-kynurenine to form kynurenic acid (KA), an intermediate in the tryptophan catabolic pathway which is also a broad spectrum antagonist of the three ionotropic excitatory amino acid receptors among others. Metabolizes the cysteine conjugates of certain halogenated alkenes and alkanes to form reactive metabolites. Catalyzes the beta-elimination of S-conjugates and Se-conjugates of L-(seleno)cysteine, resulting in the cleavage of the C-S or C-Se bond. This is Kynurenine--oxoglutarate transaminase 1 from Rattus norvegicus (Rat).